Here is a 333-residue protein sequence, read N- to C-terminus: Tryptophan--tRNA ligase (333 aa).

ATP contacts are provided by residues 9–11 (QPT) and 17–18 (GN). Residues 10–18 (PTNNLTLGN) carry the 'HIGH' region motif. Aspartate 140 contributes to the L-tryptophan binding site. Residues 152-154 (GQD), isoleucine 191, and 200-204 (KMSKS) each bind ATP. Positions 200–204 (KMSKS) match the 'KMSKS' region motif.

The protein belongs to the class-I aminoacyl-tRNA synthetase family. Homodimer.

The protein localises to the cytoplasm. It carries out the reaction tRNA(Trp) + L-tryptophan + ATP = L-tryptophyl-tRNA(Trp) + AMP + diphosphate + H(+). Functionally, catalyzes the attachment of tryptophan to tRNA(Trp). In Ureaplasma parvum serovar 3 (strain ATCC 700970), this protein is Tryptophan--tRNA ligase.